We begin with the raw amino-acid sequence, 448 residues long: Na(+)-translocating NADH-quinone reductase subunit A (448 aa).

It belongs to the NqrA family. In terms of assembly, composed of six subunits; NqrA, NqrB, NqrC, NqrD, NqrE and NqrF.

The catalysed reaction is a ubiquinone + n Na(+)(in) + NADH + H(+) = a ubiquinol + n Na(+)(out) + NAD(+). Functionally, NQR complex catalyzes the reduction of ubiquinone-1 to ubiquinol by two successive reactions, coupled with the transport of Na(+) ions from the cytoplasm to the periplasm. NqrA to NqrE are probably involved in the second step, the conversion of ubisemiquinone to ubiquinol. In Glaesserella parasuis serovar 5 (strain SH0165) (Haemophilus parasuis), this protein is Na(+)-translocating NADH-quinone reductase subunit A.